Consider the following 281-residue polypeptide: Ribosomal protein L11 methyltransferase (281 aa).

Positions 133, 154, 175, and 216 each coordinate S-adenosyl-L-methionine.

Belongs to the methyltransferase superfamily. PrmA family.

The protein localises to the cytoplasm. The catalysed reaction is L-lysyl-[protein] + 3 S-adenosyl-L-methionine = N(6),N(6),N(6)-trimethyl-L-lysyl-[protein] + 3 S-adenosyl-L-homocysteine + 3 H(+). Its function is as follows. Methylates ribosomal protein L11. The chain is Ribosomal protein L11 methyltransferase from Campylobacter jejuni subsp. jejuni serotype O:6 (strain 81116 / NCTC 11828).